The chain runs to 364 residues: Homeobox protein Nkx-2.3 (364 aa).

Positions 132–153 (GDCKAAEESERPKPRSRRKPRV) are disordered. A compositionally biased stretch (basic and acidic residues) spans 135 to 144 (KAAEESERPK). Residues 148–207 (RRKPRVLFSQAQVFELERRFKQQRYLSAPEREHLASSLKLTSTQVKIWFQNRRYKCKRQR) constitute a DNA-binding region (homeobox).

It belongs to the NK-2 homeobox family.

The protein resides in the nucleus. Transcription factor. The sequence is that of Homeobox protein Nkx-2.3 (NKX2-3) from Homo sapiens (Human).